Reading from the N-terminus, the 189-residue chain is Apolipoprotein D (189 aa).

The first 20 residues, 1–20 (MVMLLLLLSALAGLFGAAEG), serve as a signal peptide directing secretion. The residue at position 21 (Q21) is a Pyrrolidone carboxylic acid. 2 disulfides stabilise this stretch: C28-C134 and C61-C185. Residues N65 and N98 are each glycosylated (N-linked (GlcNAc...) (complex) asparagine).

Belongs to the calycin superfamily. Lipocalin family. Homodimer. In plasma, also exists as a disulfide-linked heterodimer with APOA2. In terms of processing, N-glycosylated. N-glycan heterogeneity at Asn-65: Hex5HexNAc4 (major) and Hex6HexNAc5 (minor); at Asn-98: Hex5HexNAc4 (minor), dHex1Hex5HexNAc4 (major), dHex1Hex6HexNAc5 (minor) and dHex1Hex7HexNAc6 (minor). In terms of tissue distribution, expressed in liver, intestine, pancreas, kidney, placenta, adrenal, spleen, fetal brain tissue and tears.

It localises to the secreted. APOD occurs in the macromolecular complex with lecithin-cholesterol acyltransferase. It is probably involved in the transport and binding of bilin. Appears to be able to transport a variety of ligands in a number of different contexts. This Homo sapiens (Human) protein is Apolipoprotein D (APOD).